A 377-amino-acid polypeptide reads, in one-letter code: 3-dehydroquinate synthase (377 aa).

Residues Gly-113–Asp-117, Thr-137–Thr-138, Lys-150, and Lys-159 contribute to the NAD(+) site. Zn(2+) contacts are provided by Glu-192, His-254, and His-273.

Belongs to the sugar phosphate cyclases superfamily. Dehydroquinate synthase family. The cofactor is Co(2+). Zn(2+) serves as cofactor. It depends on NAD(+) as a cofactor.

It localises to the cytoplasm. It catalyses the reaction 7-phospho-2-dehydro-3-deoxy-D-arabino-heptonate = 3-dehydroquinate + phosphate. Its pathway is metabolic intermediate biosynthesis; chorismate biosynthesis; chorismate from D-erythrose 4-phosphate and phosphoenolpyruvate: step 2/7. Catalyzes the conversion of 3-deoxy-D-arabino-heptulosonate 7-phosphate (DAHP) to dehydroquinate (DHQ). In Bartonella tribocorum (strain CIP 105476 / IBS 506), this protein is 3-dehydroquinate synthase.